A 503-amino-acid chain; its full sequence is MDSDLSPQDKKDLDKFIKFFALKTVQVIVQARLGEKISTCSSSSPTGSDWFNLAIKDIPEVTHEAKKALAGQLPGIGRSMCVEISLKTSEGDSMELETWCLEMNEKCDKDIKVSYTVYNRLSLLLKSLLAITRVTPAYKLSRQQGHDYVILYRIYFGDVQLTGLGEGFQTVRVGIVGTPIGTITLSCAYRTNLALVSSRQFERTGPIMGIIIDHFVERPFTNMAHTHPCSYRAPGEDDGGTYAGIEDSQEVCTTSFSTSPPSQLYSSRLSYQTPPLGTVDLCHPTACTGAAHPHQMVVPGKDGGIPQVPAQPNHGTGAEQGRIPSCPTGQPPQLPPPTSCSSEVKTVSPSDVLETTFTRKVGAFVNKATTQVTTTGLDLPFAAFAPRSYDMEENDPMVHPPPSPIPSSPLQGSLHSNNSSHSGGQPNDDFVMVDFKPAFSKDDLLPMDLGTFYREFQNPPQLASLSIDVSAQSMAEDLDSLPEKLAVYEKNIDEFDAFVDTLQ.

2 disordered regions span residues 300 to 345 (GKDG…SEVK) and 392 to 428 (EEND…QPND). Pro residues-rich tracts occupy residues 329 to 338 (GQPPQLPPPT) and 398 to 407 (VHPPPSPIPS). Residues 408 to 425 (SPLQGSLHSNNSSHSGGQ) show a composition bias toward low complexity.

It belongs to the ATG13 family. Metazoan subfamily. Post-translationally, phosphorylated under nutrient-rich conditions; dephosphorylated during starvation or following treatment with rapamycin.

It is found in the cytoplasm. It localises to the cytosol. The protein localises to the preautophagosomal structure. Its function is as follows. Autophagy factor required for autophagosome formation. Target of the TOR kinase signaling pathway that regulates autophagy through the control of the phosphorylation status of ATG13 and ULK1, and the regulation of the ATG13-ULK1-RB1CC1 complex. The protein is Autophagy-related protein 13 (atg13) of Danio rerio (Zebrafish).